Reading from the N-terminus, the 318-residue chain is Polyprenal reductase (318 aa).

At 1–19 (MAPWAAAQLWALNPLRALW) the chain is on the cytoplasmic side. The chain crosses the membrane as a helical span at residues 20 to 40 (LTLAAAFLLTLLLQLVPPGLL). Topologically, residues 41 to 80 (PGCALFQDLIRYGKTKREGQSRPAVCRVFDVPKRYFSHFY) are lumenal. The chain crosses the membrane as a helical span at residues 81–101 (IISALWNGFLLWHLTQSVFLG). The Cytoplasmic segment spans residues 102–119 (VPFPNWLHGLLRILGASQ). A helical membrane pass occupies residues 120–140 (FQGGELALSAFLVLVFLWLHS). At 141–156 (LRRLFECFYVSVFSNT) the chain is on the lumenal side. A helical transmembrane segment spans residues 157–177 (VIHIVQYCFGLVYYVLTGLTV). The Cytoplasmic portion of the chain corresponds to 178–194 (LSQVPMDGRNAYVIGKN). The helical transmembrane segment at 195 to 215 (LLMQARWFHILGMLMFIWSSV) threads the bilayer. At 216–265 (HQYKCHVILGNLRKNKAGVVIHCNHRIPFGDWFEYVSSPNYLAELMIYIS) the chain is on the lumenal side. The helical transmembrane segment at 266–286 (MAVTFGFHNLTWWLVVTYVFF) threads the bilayer. Residues 287–318 (SQALSAFLSHKFYKSKFVSYPKHRKAFLPFLF) are Cytoplasmic-facing.

It belongs to the steroid 5-alpha reductase family. Polyprenal reductase subfamily.

The protein localises to the endoplasmic reticulum membrane. The catalysed reaction is a di-trans,poly-cis-dolichal + NADP(+) = a di-trans,poly-cis-polyprenal + NADPH + H(+). It catalyses the reaction a 3-oxo-5alpha-steroid + NADP(+) = a 3-oxo-Delta(4)-steroid + NADPH + H(+). The enzyme catalyses androst-4-ene-3,17-dione + NADPH + H(+) = 5alpha-androstan-3,17-dione + NADP(+). It carries out the reaction 17beta-hydroxy-5alpha-androstan-3-one + NADP(+) = testosterone + NADPH + H(+). Its pathway is protein modification; protein glycosylation. Functionally, plays a key role in early steps of protein N-linked glycosylation by being involved in the conversion of polyprenol into dolichol. Acts as a polyprenal reductase that mediates the reduction of polyprenal into dolichal in a NADP-dependent mechanism. Dolichols are required for the synthesis of dolichol-linked monosaccharides and the oligosaccharide precursor used for N-glycosylation. Also able to convert testosterone (T) into 5-alpha-dihydrotestosterone (DHT). This chain is Polyprenal reductase (SRD5A3), found in Ailuropoda melanoleuca (Giant panda).